The primary structure comprises 464 residues: Chitobiosyldiphosphodolichol beta-mannosyltransferase (464 aa).

The Lumenal segment spans residues 1–2; the sequence is MA. Residues 3–23 form a helical membrane-spanning segment; it reads ASCLVLLALCLLLPLLLLGGW. The Cytoplasmic segment spans residues 24 to 99; that stretch reads KRWRRGRAAR…ELQSLAVGPR (76 aa). Positions 100-120 form an intramembrane region, helical; sequence VFQYGVKVVLQAMYLLWKLMW. The Cytoplasmic portion of the chain corresponds to 121 to 464; sequence REPGAYIFLQ…QTVLPLVMDT (344 aa). Serine 242 carries the post-translational modification Phosphoserine. The interval 243 to 262 is disordered; that stretch reads PFRARSEPEDPVTERSAFTE.

The protein belongs to the glycosyltransferase group 1 family. Glycosyltransferase 33 subfamily.

It is found in the endoplasmic reticulum membrane. It carries out the reaction an N,N'-diacetylchitobiosyl-diphospho-di-trans,poly-cis-dolichol + GDP-alpha-D-mannose = a beta-D-Man-(1-&gt;4)-beta-D-GlcNAc-(1-&gt;4)-alpha-D-GlcNAc-diphospho-di-trans,poly-cis-dolichol + GDP + H(+). It functions in the pathway protein modification; protein glycosylation. Mannosyltransferase that operates in the biosynthetic pathway of dolichol-linked oligosaccharides, the glycan precursors employed in protein asparagine (N)-glycosylation. The assembly of dolichol-linked oligosaccharides begins on the cytosolic side of the endoplasmic reticulum membrane and finishes in its lumen. The sequential addition of sugars to dolichol pyrophosphate produces dolichol-linked oligosaccharides containing fourteen sugars, including two GlcNAcs, nine mannoses and three glucoses. Once assembled, the oligosaccharide is transferred from the lipid to nascent proteins by oligosaccharyltransferases. Catalyzes, on the cytoplasmic face of the endoplasmic reticulum, the addition of the first mannose residues to the dolichol-linked oligosaccharide chain, to produce Man1GlcNAc(2)-PP-dolichol core oligosaccharide. Man1GlcNAc(2)-PP-dolichol is a substrate for ALG2, the following enzyme in the biosynthetic pathway. The chain is Chitobiosyldiphosphodolichol beta-mannosyltransferase from Homo sapiens (Human).